Reading from the N-terminus, the 1058-residue chain is Carbamoyl phosphate synthase large chain (1058 aa).

Residues 1–401 (MPKRTDIKKI…SLLKACRSLE (401 aa)) form a carboxyphosphate synthetic domain region. Positions 129, 169, 175, 176, 208, 210, 215, 241, 242, 243, 284, and 298 each coordinate ATP. An ATP-grasp 1 domain is found at 133–327 (KALMKALKQP…IAKIAAKIAI (195 aa)). Residues Q284, E298, and N300 each coordinate Mg(2+). 3 residues coordinate Mn(2+): Q284, E298, and N300. The tract at residues 402–546 (IGIYHNECKE…YSTYAFENES (145 aa)) is oligomerization domain. The carbamoyl phosphate synthetic domain stretch occupies residues 547 to 929 (QASPNKSILV…ALYKAFEASY (383 aa)). Positions 671 to 861 (EKALHDINIP…MAQVATKLIL (191 aa)) constitute an ATP-grasp 2 domain. ATP is bound by residues R707, S746, I748, E752, G777, V778, H779, S780, Q820, and E832. Residues Q820, E832, and N834 each contribute to the Mg(2+) site. Mn(2+)-binding residues include Q820, E832, and N834. The MGS-like domain maps to 930-1058 (MHVPDFGNII…ESRSFSIQSL (129 aa)). The segment at 930-1058 (MHVPDFGNII…ESRSFSIQSL (129 aa)) is allosteric domain.

This sequence belongs to the CarB family. Composed of two chains; the small (or glutamine) chain promotes the hydrolysis of glutamine to ammonia, which is used by the large (or ammonia) chain to synthesize carbamoyl phosphate. Tetramer of heterodimers (alpha,beta)4. Requires Mg(2+) as cofactor. Mn(2+) is required as a cofactor.

It catalyses the reaction hydrogencarbonate + L-glutamine + 2 ATP + H2O = carbamoyl phosphate + L-glutamate + 2 ADP + phosphate + 2 H(+). The catalysed reaction is hydrogencarbonate + NH4(+) + 2 ATP = carbamoyl phosphate + 2 ADP + phosphate + 2 H(+). Its pathway is amino-acid biosynthesis; L-arginine biosynthesis; carbamoyl phosphate from bicarbonate: step 1/1. It participates in pyrimidine metabolism; UMP biosynthesis via de novo pathway; (S)-dihydroorotate from bicarbonate: step 1/3. In terms of biological role, large subunit of the glutamine-dependent carbamoyl phosphate synthetase (CPSase). CPSase catalyzes the formation of carbamoyl phosphate from the ammonia moiety of glutamine, carbonate, and phosphate donated by ATP, constituting the first step of 2 biosynthetic pathways, one leading to arginine and/or urea and the other to pyrimidine nucleotides. The large subunit (synthetase) binds the substrates ammonia (free or transferred from glutamine from the small subunit), hydrogencarbonate and ATP and carries out an ATP-coupled ligase reaction, activating hydrogencarbonate by forming carboxy phosphate which reacts with ammonia to form carbamoyl phosphate. This Streptococcus uberis (strain ATCC BAA-854 / 0140J) protein is Carbamoyl phosphate synthase large chain.